Here is a 1249-residue protein sequence, read N- to C-terminus: MRVVHLLVVLATYVSTTSSFNKESIKECAKVLSEHMKETFSKISHETILKQNYEKLVEEEQFDPRAELKKSKHRIEDYLKVRSQFAYKAKISLEARSVRNDSTVNDPQSKSFIRFMSAKQGNDGTTIYESNHLGKRLKVNETKSFNLTQNANFYTLPTSSVSSAVHIPTPLYDRNEDLLRKIDWSDIDAVYRTNREETKDLAFQLFCSEAGYMRYYPAASWFWDNQDEHLDLFDCRNTEWYINSATNSKNVLIMLDMSGSMLGQRYEVAKQTTEAILETLSHNDYFNIMTFSKNTFLLDGCNGTNGLLQATMRNKKALRRKMDTYQSEGKAEYEKALPLAFSVLLDLKGSYALYTKEEMSMMSANATNEYQFHLELPEHVLAATKQYIDSINNGGGDNNRGACENVIMLITDGAPNAYKKIFDMYNADKKVRVFTFLVGDEAIDFNEVREMACNNRGYMVHVANMADVDEKIHHYIRRMSRVVGRHYKESGQLSWWTGVYRERLYLPRPEIFAEPVPITNQSFAVMNKMASRRKIRLQKSEARSRMFVTTVSYPVIVNETFMGVAAVNIPLTEVAQKSHPANIGSKSYFFMLDQNGFVMTHPQLRPIDPFTKYHKQNYNNMDLLELEVGQNQNVRSSQKSQAVSDLVCESGANYAECVDDLRKAVRKMIIDCDNSDVQQLDVLYATELLDRVYPQTNTYYAECINHANFVLGLAVAKGDDYRVVKKQKKYDFGRVKMDWMGDKRWRLHPHWRYCFLNDTDTHMSKEEAFEIYAQQMSDSGKAPLLCEYRRNLVEKLLLDMEATSNLIDSWDTQFNFMKNNLIHLAFFATPSGMIRYYNLTLQDYDYIDPYWSIFEHIGHLLSIEHAQESYNHFITDLNRKSTDDRYYRRAVRMKDTIMFDVSNNSKIWYKSETQLTGYGLNENLTMLGQAFKAIYLDKAVLGVSGFEFAYDHVVDTMAEHGCPASDDRKWCVLLDEHAYVFFSNQNDISYEDYLVGKGKHISQYFGGLNRIAQRAMALLVENKFYTKLTYTDNQAVCKAEKVVTTSGNRLRPFYPIFRFLMQTFNFMVRLASQISGGFLIWLPNIQFTEAYTASFHEGTDVYPCPKQSSFYFSNKDGKNRPGTTHLVNGNRSERPCKMNAKCSVKMEASFVDGTNLVMVWITQDKASENCYDESECSMEISNQVPFGFEEVKNEETCEENEKRKSKANDVCYSIDDDDSENERRPCSTSPTIVSIFQILFGVFLHFCIF.

The signal sequence occupies residues 1–19 (MRVVHLLVVLATYVSTTSS). The Extracellular segment spans residues 20-1228 (FNKESIKECA…SENERRPCST (1209 aa)). 11 N-linked (GlcNAc...) asparagine glycosylation sites follow: Asn100, Asn140, Asn146, Asn302, Asn520, Asn558, Asn757, Asn838, Asn903, Asn923, and Asn1130. The VWFA domain maps to 250-479 (NVLIMLDMSG…EKIHHYIRRM (230 aa)). The chain crosses the membrane as a helical span at residues 1229–1248 (SPTIVSIFQILFGVFLHFCI). Position 1249 (Phe1249) is a topological domain, cytoplasmic.

In terms of tissue distribution, decendants of the cells AB and AB.p (that give rise to nearly all non-pharyngeal neurons), decendants of P1 (that give rise to body muscle) and cell lineages that give rise to the adult and juvenile motor neurons. Expressed in body wall, vulval muscle and pharyngeal muscle.

It is found in the membrane. Its function is as follows. May act as an auxiliary subunit of the unc-2 voltage-gated calcium channel which appears to trigger calcium-activated signaling pathways that control the serotonin response. Inhibiting serotonin sensitivity of the vulval muscles results in egg laying defects. May act in both neurons and muscle cells to enhance motor activity as it is required for coordinated movement. Has a role in neural depolarization-induced calcium influx and pharyngeal pumping. Involved in restricting the expression of the putative olfactory receptor str-2 to only one of the two AWC neurons. The protein is Voltage-dependent calcium channel unc-36 (unc-36) of Caenorhabditis elegans.